The chain runs to 306 residues: Ribonuclease HIII (306 aa).

An RNase H type-2 domain is found at 87–302 (WSVVGSDEVG…TKKAEALAKK (216 aa)). Residues Asp-93, Glu-94, and Asp-196 each contribute to the a divalent metal cation site.

It belongs to the RNase HII family. RnhC subfamily. It depends on Mn(2+) as a cofactor. Mg(2+) is required as a cofactor.

It localises to the cytoplasm. It catalyses the reaction Endonucleolytic cleavage to 5'-phosphomonoester.. In terms of biological role, endonuclease that specifically degrades the RNA of RNA-DNA hybrids. The protein is Ribonuclease HIII of Exiguobacterium sibiricum (strain DSM 17290 / CCUG 55495 / CIP 109462 / JCM 13490 / 255-15).